Consider the following 504-residue polypeptide: Protein nucleotidyltransferase YdiU (504 aa).

Gly-99, Gly-101, Arg-102, Lys-122, Asp-134, Gly-135, Arg-185, and Arg-192 together coordinate ATP. Asp-261 functions as the Proton acceptor in the catalytic mechanism. Mg(2+)-binding residues include Asn-262 and Asp-271. Position 271 (Asp-271) interacts with ATP.

It belongs to the SELO family. Requires Mg(2+) as cofactor. The cofactor is Mn(2+).

It carries out the reaction L-seryl-[protein] + ATP = 3-O-(5'-adenylyl)-L-seryl-[protein] + diphosphate. The enzyme catalyses L-threonyl-[protein] + ATP = 3-O-(5'-adenylyl)-L-threonyl-[protein] + diphosphate. The catalysed reaction is L-tyrosyl-[protein] + ATP = O-(5'-adenylyl)-L-tyrosyl-[protein] + diphosphate. It catalyses the reaction L-histidyl-[protein] + UTP = N(tele)-(5'-uridylyl)-L-histidyl-[protein] + diphosphate. It carries out the reaction L-seryl-[protein] + UTP = O-(5'-uridylyl)-L-seryl-[protein] + diphosphate. The enzyme catalyses L-tyrosyl-[protein] + UTP = O-(5'-uridylyl)-L-tyrosyl-[protein] + diphosphate. In terms of biological role, nucleotidyltransferase involved in the post-translational modification of proteins. It can catalyze the addition of adenosine monophosphate (AMP) or uridine monophosphate (UMP) to a protein, resulting in modifications known as AMPylation and UMPylation. This chain is Protein nucleotidyltransferase YdiU, found in Methylococcus capsulatus (strain ATCC 33009 / NCIMB 11132 / Bath).